Here is a 302-residue protein sequence, read N- to C-terminus: Nucleotide-binding protein Rsph17029_0317 (302 aa).

An ATP-binding site is contributed by 15 to 22 (GPSGAGRT). 62-65 (DVRN) contributes to the GTP binding site.

It belongs to the RapZ-like family.

Displays ATPase and GTPase activities. This chain is Nucleotide-binding protein Rsph17029_0317, found in Cereibacter sphaeroides (strain ATCC 17029 / ATH 2.4.9) (Rhodobacter sphaeroides).